A 314-amino-acid chain; its full sequence is Acetyl-coenzyme A carboxylase carboxyl transferase subunit alpha (314 aa).

A CoA carboxyltransferase C-terminal domain is found at 32–289; it reads EIDMLEASLE…KSAFVEQLDS (258 aa).

This sequence belongs to the AccA family. In terms of assembly, acetyl-CoA carboxylase is a heterohexamer composed of biotin carboxyl carrier protein (AccB), biotin carboxylase (AccC) and two subunits each of ACCase subunit alpha (AccA) and ACCase subunit beta (AccD).

The protein localises to the cytoplasm. The enzyme catalyses N(6)-carboxybiotinyl-L-lysyl-[protein] + acetyl-CoA = N(6)-biotinyl-L-lysyl-[protein] + malonyl-CoA. It functions in the pathway lipid metabolism; malonyl-CoA biosynthesis; malonyl-CoA from acetyl-CoA: step 1/1. Functionally, component of the acetyl coenzyme A carboxylase (ACC) complex. First, biotin carboxylase catalyzes the carboxylation of biotin on its carrier protein (BCCP) and then the CO(2) group is transferred by the carboxyltransferase to acetyl-CoA to form malonyl-CoA. This is Acetyl-coenzyme A carboxylase carboxyl transferase subunit alpha from Staphylococcus aureus (strain bovine RF122 / ET3-1).